Reading from the N-terminus, the 130-residue chain is Small ribosomal subunit protein uS9 (130 aa).

It belongs to the universal ribosomal protein uS9 family.

The protein is Small ribosomal subunit protein uS9 of Pasteurella multocida (strain Pm70).